Here is a 375-residue protein sequence, read N- to C-terminus: Probable cytochrome c oxidase subunit 2 (375 aa).

Transmembrane regions (helical) follow at residues 36 to 56 (LAVS…DNVW), 80 to 100 (IIAA…TVVF), and 122 to 142 (LTYT…TVVV). Cu cation is bound by residues histidine 264, cysteine 305, cysteine 309, and histidine 313. Polar residues predominate over residues 353-363 (VATSTRPFNTD). Residues 353 to 375 (VATSTRPFNTDRTVKSAAAPEAE) form a disordered region.

Belongs to the cytochrome c oxidase subunit 2 family. The cofactor is Cu cation. Heme is required as a cofactor.

It is found in the cell membrane. It carries out the reaction 4 Fe(II)-[cytochrome c] + O2 + 8 H(+)(in) = 4 Fe(III)-[cytochrome c] + 2 H2O + 4 H(+)(out). Functionally, subunits I and II form the functional core of the enzyme complex. Electrons originating in cytochrome c are transferred via heme a and Cu(A) to the binuclear center formed by heme a3 and Cu(B). The sequence is that of Probable cytochrome c oxidase subunit 2 (ctaC) from Nocardia farcinica (strain IFM 10152).